Here is a 327-residue protein sequence, read N- to C-terminus: MGLPRRLLLLLLLATTCVPASQGLQCMQCESNQSCLVEECALGQDLCRTTVLREWQDDRELEVVTRGCAHSEKTNRTMSYRMGSMIISLTETVCATNLCNRPRPGARGRAFPQGRYLECASCTSLDQSCERGREQSLQCRYPTEHCIEVVTLQSTERSLKDEDYTRGCGSLPGCPGTAGFHSNQTFHFLKCCNYTHCNGGPVLDLQSFPPNGFQCYSCEGNNTLGCSSEEASLINCRGPMNQCLVATGLDVLGNRSYTVRGCATASWCQGSHVADSFPTHLNVSVSCCHGSGCNSPTGGAPRPGPAQLSLIASLLLTLGLWGVLLWT.

Residues 1–23 form the signal peptide; the sequence is MGLPRRLLLLLLLATTCVPASQG. 3 UPAR/Ly6 domains span residues 24–117, 117–212, and 213–298; these read LQCM…GRYL, LECA…PPNG, and FQCY…SPTG. Cystine bridges form between cysteine 26-cysteine 47, cysteine 29-cysteine 35, and cysteine 40-cysteine 68. Asparagine 32 carries N-linked (GlcNAc...) asparagine glycosylation. Residue asparagine 75 is glycosylated (N-linked (GlcNAc...) asparagine). 11 disulfide bridges follow: cysteine 94–cysteine 99, cysteine 119–cysteine 146, cysteine 122–cysteine 129, cysteine 139–cysteine 168, cysteine 174–cysteine 191, cysteine 192–cysteine 197, cysteine 215–cysteine 243, cysteine 218–cysteine 226, cysteine 236–cysteine 262, cysteine 268–cysteine 287, and cysteine 288–cysteine 293. Residues asparagine 183, asparagine 193, asparagine 221, asparagine 254, and asparagine 282 are each glycosylated (N-linked (GlcNAc...) asparagine). Glycine 298 carries the GPI-anchor amidated glycine lipid modification. The propeptide at 299-327 is removed in mature form; the sequence is GAPRPGPAQLSLIASLLLTLGLWGVLLWT.

Monomer. Interacts (via the UPAR/Ly6 domains) with SRPX2. Interacts with MRC2. Interacts with SORL1 (via N-terminal ectodomain); this interaction decreases PLAUR internalization. The ternary complex composed of PLAUR-PLAU-SERPINE1 also interacts with SORL1. Interacts with CD82; this interaction prevents PLAUR from binding to its high affinity ligand PLAU. In terms of tissue distribution, expressed in angiogenic endothelial cells (at protein level).

It is found in the cell membrane. It localises to the secreted. In terms of biological role, acts as a receptor for urokinase plasminogen activator. Plays a role in localizing and promoting plasmin formation. Mediates the proteolysis-independent signal transduction activation effects of U-PA. The chain is Urokinase plasminogen activator surface receptor (Plaur) from Mus musculus (Mouse).